The primary structure comprises 577 residues: Arginine--tRNA ligase (577 aa).

A 'HIGH' region motif is present at residues 122-132 (PNVAKEMHVGH).

It belongs to the class-I aminoacyl-tRNA synthetase family. As to quaternary structure, monomer.

It is found in the cytoplasm. It carries out the reaction tRNA(Arg) + L-arginine + ATP = L-arginyl-tRNA(Arg) + AMP + diphosphate. This chain is Arginine--tRNA ligase, found in Salmonella schwarzengrund (strain CVM19633).